The sequence spans 127 residues: Protein FAM229A (127 aa).

The segment at 1–96 (MLPSSTPGPG…ATEHNPVRPL (96 aa)) is disordered. Residues 24–39 (RSPAARAPAAASSLGP) are compositionally biased toward low complexity.

Belongs to the FAM229 family.

The sequence is that of Protein FAM229A (FAM229A) from Homo sapiens (Human).